We begin with the raw amino-acid sequence, 266 residues long: UPF0354 protein lwe1624 (266 aa).

This sequence belongs to the UPF0354 family.

This is UPF0354 protein lwe1624 from Listeria welshimeri serovar 6b (strain ATCC 35897 / DSM 20650 / CCUG 15529 / CIP 8149 / NCTC 11857 / SLCC 5334 / V8).